We begin with the raw amino-acid sequence, 391 residues long: Chalcone synthase (391 aa).

Cys164 is a catalytic residue.

The protein belongs to the thiolase-like superfamily. Chalcone/stilbene synthases family.

The catalysed reaction is (E)-4-coumaroyl-CoA + 3 malonyl-CoA + 3 H(+) = 2',4,4',6'-tetrahydroxychalcone + 3 CO2 + 4 CoA. It participates in secondary metabolite biosynthesis; flavonoid biosynthesis. Its function is as follows. The primary product of this enzyme is 4,2',4',6'-tetrahydroxychalcone (also termed naringenin-chalcone or chalcone) which can under specific conditions spontaneously isomerize into naringenin. This chain is Chalcone synthase (CHS), found in Dianthus caryophyllus (Carnation).